Here is a 319-residue protein sequence, read N- to C-terminus: Annexin A4 (319 aa).

Ala-2 is modified (N-acetylalanine). Phosphothreonine; by PKC is present on Thr-7. Residue Ser-12 is modified to Phosphoserine. Annexin repeat units lie at residues 14 to 85 (FNAA…GMMT), 86 to 157 (PTVL…SLSA), 169 to 241 (ALVR…AIVK), and 245 to 316 (NKSA…ILCG). An N6-acetyllysine mark is found at Lys-213, Lys-293, and Lys-300.

This sequence belongs to the annexin family. Monomer.

It localises to the zymogen granule membrane. Functionally, calcium/phospholipid-binding protein which promotes membrane fusion and is involved in exocytosis. This chain is Annexin A4 (ANXA4), found in Sus scrofa (Pig).